Here is a 431-residue protein sequence, read N- to C-terminus: Histidinol dehydrogenase (431 aa).

Residues Tyr-130, Gln-191, and Asn-214 each contribute to the NAD(+) site. Residues Ser-237, Gln-259, and His-262 each contribute to the substrate site. Positions 259 and 262 each coordinate Zn(2+). Active-site proton acceptor residues include Glu-327 and His-328. Residues His-328, Asp-361, Glu-415, and His-420 each contribute to the substrate site. Asp-361 provides a ligand contact to Zn(2+). His-420 contributes to the Zn(2+) binding site.

The protein belongs to the histidinol dehydrogenase family. The cofactor is Zn(2+).

The enzyme catalyses L-histidinol + 2 NAD(+) + H2O = L-histidine + 2 NADH + 3 H(+). The protein operates within amino-acid biosynthesis; L-histidine biosynthesis; L-histidine from 5-phospho-alpha-D-ribose 1-diphosphate: step 9/9. In terms of biological role, catalyzes the sequential NAD-dependent oxidations of L-histidinol to L-histidinaldehyde and then to L-histidine. The protein is Histidinol dehydrogenase of Syntrophotalea carbinolica (strain DSM 2380 / NBRC 103641 / GraBd1) (Pelobacter carbinolicus).